Here is a 336-residue protein sequence, read N- to C-terminus: Anthranilate phosphoribosyltransferase (336 aa).

Residues glycine 80, 83–84 (GD), threonine 88, 90–93 (NIST), 108–116 (KHGNRSITS), and serine 120 contribute to the 5-phospho-alpha-D-ribose 1-diphosphate site. An anthranilate-binding site is contributed by glycine 80. Residue serine 92 coordinates Mg(2+). Residue asparagine 111 coordinates anthranilate. Arginine 166 lines the anthranilate pocket. Mg(2+) contacts are provided by aspartate 224 and glutamate 225.

It belongs to the anthranilate phosphoribosyltransferase family. In terms of assembly, homodimer. Mg(2+) is required as a cofactor.

The enzyme catalyses N-(5-phospho-beta-D-ribosyl)anthranilate + diphosphate = 5-phospho-alpha-D-ribose 1-diphosphate + anthranilate. Its pathway is amino-acid biosynthesis; L-tryptophan biosynthesis; L-tryptophan from chorismate: step 2/5. In terms of biological role, catalyzes the transfer of the phosphoribosyl group of 5-phosphorylribose-1-pyrophosphate (PRPP) to anthranilate to yield N-(5'-phosphoribosyl)-anthranilate (PRA). The protein is Anthranilate phosphoribosyltransferase of Caldicellulosiruptor saccharolyticus (strain ATCC 43494 / DSM 8903 / Tp8T 6331).